A 269-amino-acid chain; its full sequence is Putative pyruvate, phosphate dikinase regulatory protein (269 aa).

G151–T158 lines the ADP pocket.

The protein belongs to the pyruvate, phosphate/water dikinase regulatory protein family. PDRP subfamily.

The enzyme catalyses N(tele)-phospho-L-histidyl/L-threonyl-[pyruvate, phosphate dikinase] + ADP = N(tele)-phospho-L-histidyl/O-phospho-L-threonyl-[pyruvate, phosphate dikinase] + AMP + H(+). It catalyses the reaction N(tele)-phospho-L-histidyl/O-phospho-L-threonyl-[pyruvate, phosphate dikinase] + phosphate + H(+) = N(tele)-phospho-L-histidyl/L-threonyl-[pyruvate, phosphate dikinase] + diphosphate. Functionally, bifunctional serine/threonine kinase and phosphorylase involved in the regulation of the pyruvate, phosphate dikinase (PPDK) by catalyzing its phosphorylation/dephosphorylation. The sequence is that of Putative pyruvate, phosphate dikinase regulatory protein from Staphylococcus aureus.